A 155-amino-acid polypeptide reads, in one-letter code: UPF0225 protein ECA2332 (155 aa).

The protein belongs to the UPF0225 family.

The chain is UPF0225 protein ECA2332 from Pectobacterium atrosepticum (strain SCRI 1043 / ATCC BAA-672) (Erwinia carotovora subsp. atroseptica).